The primary structure comprises 692 residues: Formate hydrogenlyase transcriptional activator (692 aa).

Residues Asp202–Val344 form the GAF domain. A Sigma-54 factor interaction domain is found at Ile381–Leu610. ATP contacts are provided by residues Gly409–Glu416 and Ala472–Glu481. Residues Pro663–Lys682 constitute a DNA-binding region (H-T-H motif).

Functionally, required for induction of expression of the formate dehydrogenase H and hydrogenase-3 structural genes. This chain is Formate hydrogenlyase transcriptional activator (fhlA), found in Salmonella typhimurium (strain SL1344).